Reading from the N-terminus, the 362-residue chain is Probable tocopherol O-methyltransferase, chloroplastic (362 aa).

The N-terminal 55 residues, 1-55, are a transit peptide targeting the chloroplast; it reads MAHAAAATGALAPLHPLLRCTSRHLCASASPRAGLCLHHHRRRRRSSRRTKLAVR. Residues 141–150 are SAM motif I; that stretch reads VVDVGCGIGG. Positions 204-212 are SAM motif II; it reads GQFDLVWSM. Residues 231 to 240 form an SAM motif III region; that stretch reads VAAPGARIII.

The protein belongs to the class I-like SAM-binding methyltransferase superfamily. gTMT family.

Its subcellular location is the plastid. It is found in the chloroplast. It carries out the reaction gamma-tocopherol + S-adenosyl-L-methionine = (+)-alpha-tocopherol + S-adenosyl-L-homocysteine + H(+). It catalyses the reaction delta-tocotrienol + S-adenosyl-L-methionine = beta-tocotrienol + S-adenosyl-L-homocysteine + H(+). The catalysed reaction is gamma-tocotrienol + S-adenosyl-L-methionine = alpha-tocotrienol + S-adenosyl-L-homocysteine + H(+). The enzyme catalyses delta-tocopherol + S-adenosyl-L-methionine = beta-tocopherol + S-adenosyl-L-homocysteine + H(+). Its pathway is cofactor biosynthesis; tocopherol biosynthesis. In terms of biological role, involved in the synthesis of tocopherol (vitamin E). Methylates gamma- and delta-tocopherol to form beta- and alpha-tocopherol, respectively. The polypeptide is Probable tocopherol O-methyltransferase, chloroplastic (VTE4) (Oryza sativa subsp. japonica (Rice)).